Here is a 414-residue protein sequence, read N- to C-terminus: STAGA complex 65 subunit gamma (414 aa).

Positions Asn-87–Ser-108 are disordered. Residue Ser-108 is modified to Phosphoserine. Residue Lys-271 forms a Glycyl lysine isopeptide (Lys-Gly) (interchain with G-Cter in SUMO2) linkage. A phosphoserine mark is found at Ser-323 and Ser-334. The segment at Pro-346 to Ile-414 is disordered. Residues Ser-386–Ser-395 show a composition bias toward low complexity.

In terms of assembly, component of the STAGA transcription coactivator-HAT complex, at least composed of SUPT3H, SUPT7L, GCN5L2, TAF5L, TAF6L, TADA3L, TAD1L, TAF10, TAF12 and TAF9. In terms of processing, sumoylated. As to expression, expressed at high levels in adenocarcinomas and gliomas and low in esophageal cancers and malignant hematological disease. Also expressed at high level in the thymus, low in peripheral blood mononuclear cells, and lowest in the stomach, small intestine, and skeletal muscle.

The protein resides in the nucleus. The polypeptide is STAGA complex 65 subunit gamma (SUPT7L) (Homo sapiens (Human)).